Reading from the N-terminus, the 312-residue chain is GDP-L-fucose synthase (312 aa).

NADP(+) is bound at residue 11–17 (GGRGMVG). The Proton donor/acceptor role is filled by Tyr-136. Residues Lys-140 and His-179 each contribute to the NADP(+) site. 3 residues coordinate substrate: Lys-187, Trp-202, and Arg-209.

The protein belongs to the NAD(P)-dependent epimerase/dehydratase family. Fucose synthase subfamily.

It carries out the reaction GDP-beta-L-fucose + NADP(+) = GDP-4-dehydro-alpha-D-rhamnose + NADPH + H(+). It functions in the pathway nucleotide-sugar biosynthesis; GDP-L-fucose biosynthesis via de novo pathway; GDP-L-fucose from GDP-alpha-D-mannose: step 2/2. In terms of biological role, catalyzes the two-step NADP-dependent conversion of GDP-4-dehydro-6-deoxy-D-mannose to GDP-fucose, involving an epimerase and a reductase reaction. The protein is GDP-L-fucose synthase of Azorhizobium caulinodans (strain ATCC 43989 / DSM 5975 / JCM 20966 / LMG 6465 / NBRC 14845 / NCIMB 13405 / ORS 571).